Consider the following 444-residue polypeptide: Ribitol-5-phosphate xylosyltransferase 1 (444 aa).

The Cytoplasmic segment spans residues 1–9; that stretch reads MRLTRTRLC. A helical; Signal-anchor for type II membrane protein transmembrane segment spans residues 10–30; that stretch reads SLLVALYCLFSIYAAYHVFFG. At 31-444 the chain is on the extracellular side; sequence RRRRPLGTTS…ESSFFINNKV (414 aa). A disordered region spans residues 38-79; it reads TTSRNSRKAAAAQAKERRGREQSALESEEWNPWEGDEKNEQR. Residues 51 to 60 are compositionally biased toward basic and acidic residues; that stretch reads AKERRGREQS.

The protein belongs to the RXYLT1 family. Forms a complex composed of FKTN/fukutin, FKRP and RXYLT1/TMEM5.

The protein resides in the golgi apparatus membrane. The catalysed reaction is 3-O-[Rib-ol-P-Rib-ol-P-3-beta-D-GalNAc-(1-&gt;3)-beta-D-GlcNAc-(1-&gt;4)-(O-6-P-alpha-D-Man)]-Thr-[protein] + UDP-alpha-D-xylose = 3-O-[beta-D-Xyl-(1-&gt;4)-Rib-ol-P-Rib-ol-P-3-beta-D-GalNAc-(1-&gt;3)-beta-D-GlcNAc-(1-&gt;4)-(O-6-P-alpha-D-Man)]-Thr-[protein] + UDP + H(+). Its pathway is protein modification; protein glycosylation. Functionally, acts as a UDP-D-xylose:ribitol-5-phosphate beta1,4-xylosyltransferase, which catalyzes the transfer of UDP-D-xylose to ribitol 5-phosphate (Rbo5P) to form the Xylbeta1-4Rbo5P linkage on O-mannosyl glycan. Participates in the biosynthesis of the phosphorylated O-mannosyl trisaccharide (N-acetylgalactosamine-beta-3-N-acetylglucosamine-beta-4-(phosphate-6-)mannose), a carbohydrate structure present in alpha-dystroglycan (DAG1), which is required for binding laminin G-like domain-containing extracellular proteins with high affinity. The chain is Ribitol-5-phosphate xylosyltransferase 1 from Mus musculus (Mouse).